We begin with the raw amino-acid sequence, 1679 residues long: Maestro heat-like repeat-containing protein family member 2A (1679 aa).

HEAT repeat units lie at residues 68–91 (ATTD…ISTQ), 92–128 (RKMN…QMRD), 190–229 (MPYM…TVQF), 293–313 (EQVY…GHWP), 314–350 (LFPS…ELHV), 380–417 (SYPK…ADDP), 422–459 (KTIY…SGFQ), 571–610 (PAPQ…SIAP), 614–654 (DMWE…SLKK), 737–774 (KTVL…ETVK), 848–887 (SALT…MKPF), 991–1028 (GQFG…LHVS), 1219–1261 (DPLM…SHGP), 1387–1425 (KLLR…GAPR), and 1632–1669 (MDLV…CNQH).

In Mus musculus (Mouse), this protein is Maestro heat-like repeat-containing protein family member 2A (Mroh2a).